We begin with the raw amino-acid sequence, 305 residues long: Sulfate adenylyltransferase subunit 2 (305 aa).

The protein belongs to the PAPS reductase family. CysD subfamily. In terms of assembly, heterodimer composed of CysD, the smaller subunit, and CysN.

The catalysed reaction is sulfate + ATP + H(+) = adenosine 5'-phosphosulfate + diphosphate. It functions in the pathway sulfur metabolism; hydrogen sulfide biosynthesis; sulfite from sulfate: step 1/3. Functionally, with CysN forms the ATP sulfurylase (ATPS) that catalyzes the adenylation of sulfate producing adenosine 5'-phosphosulfate (APS) and diphosphate, the first enzymatic step in sulfur assimilation pathway. APS synthesis involves the formation of a high-energy phosphoric-sulfuric acid anhydride bond driven by GTP hydrolysis by CysN coupled to ATP hydrolysis by CysD. This is Sulfate adenylyltransferase subunit 2 from Pseudomonas fluorescens (strain ATCC BAA-477 / NRRL B-23932 / Pf-5).